The primary structure comprises 69 residues: UPF0150 protein Ta0767 (69 aa).

This sequence belongs to the UPF0150 family.

This is UPF0150 protein Ta0767 from Thermoplasma acidophilum (strain ATCC 25905 / DSM 1728 / JCM 9062 / NBRC 15155 / AMRC-C165).